The primary structure comprises 387 residues: uncharacterized protein (387 aa).

Disordered regions lie at residues 1 to 126, 138 to 169, and 275 to 298; these read MDGR…GDDE, GNQG…RNEE, and SSIF…AGNK. A compositionally biased stretch (basic and acidic residues) spans 32–45; sequence SSDHRTSNSAESKK. Polar residues-rich tracts occupy residues 49–63 and 78–93; these read SGKS…NNDN and DLSS…SKGT. Over residues 155-169 the composition is skewed to basic and acidic residues; that stretch reads ENGKNDIEKNNRNEE. Residues 275-296 are compositionally biased toward polar residues; it reads SSIFSDSQAVTTDDEGISSTAG.

This sequence belongs to the ThrE exporter (TC 2.A.79) family.

This is an uncharacterized protein from Saccharomyces cerevisiae (strain ATCC 204508 / S288c) (Baker's yeast).